The chain runs to 655 residues: Integrin beta-5 (655 aa).

The 234-residue stretch at Asp1–Ile234 folds into the VWFA domain. Topologically, residues Asp1–Asn575 are extracellular. Residues Ser3 and Ser5 each contribute to the Mg(2+) site. Ca(2+)-binding residues include Ser5, Asp8, Asp9, and Asp40. A disulfide bond links Cys58 and Cys67. Ca(2+) is bound by residues Asn98, Asp100, Pro102, and Glu103. Glu103 provides a ligand contact to Mg(2+). Cys115 and Cys156 form a disulfide bridge. Asn203 carries an N-linked (GlcNAc...) asparagine glycan. Residue Gly218 participates in Ca(2+) binding. Intrachain disulfides connect Cys257/Cys269, Cys289/Cys317, Cys321/Cys340, Cys332/Cys343, Cys345/Cys354, Cys356/Cys386, Cys369/Cys384, Cys378/Cys389, Cys391/Cys404, Cys406/Cys427, Cys411/Cys425, Cys419/Cys430, and Cys432/Cys441. Asn316 carries N-linked (GlcNAc...) asparagine glycosylation. 4 I-EGF domains span residues Cys321–Glu355, Cys356–Glu405, Cys406–Asn442, and Cys443–Glu482. Residue Asn408 is glycosylated (N-linked (GlcNAc...) asparagine). An N-linked (GlcNAc...) asparagine glycan is attached at Asn442. 9 disulfides stabilise this stretch: Cys443-Cys466, Cys450-Cys464, Cys458-Cys469, Cys471-Cys481, Cys484-Cys487, Cys491-Cys538, Cys497-Cys517, Cys500-Cys513, and Cys546-Cys570. Asn510 and Asn561 each carry an N-linked (GlcNAc...) asparagine glycan. Residues Ala576 to Trp598 traverse the membrane as a helical segment. Topologically, residues Lys599 to Asp655 are cytoplasmic. The residue at position 626 (Ser626) is a Phosphoserine.

The protein belongs to the integrin beta chain family. In terms of assembly, heterodimer of an alpha and a beta subunit. Beta-5 (ITGB5) associates with alpha-V (ITGAV). Interacts with MYO10. Interacts with DAB2. Integrin ITGAV:ITGB5 interacts with FBLN5 (via N-terminus). ITGAV:ITGB5 interacts with CCN3. Interacts with tensin TNS3; TNS3 also interacts with PEAK1, thus acting as an adapter molecule to bridge the association of PEAK1 with ITGB5.

Its subcellular location is the cell membrane. Its function is as follows. Integrin alpha-V/beta-5 (ITGAV:ITGB5) is a receptor for fibronectin. It recognizes the sequence R-G-D in its ligand. This chain is Integrin beta-5 (ITGB5), found in Papio cynocephalus (Yellow baboon).